The sequence spans 471 residues: Putative multidrug resistance protein MdtD (471 aa).

Over 1 to 11 (MTDLPDSTRWQ) the chain is Periplasmic. Residues 12–32 (LWIVAFGFFMQSLDTTIVNTA) form a helical membrane-spanning segment. Over 33-48 (LPSMAQSLGESPLHMH) the chain is Cytoplasmic. The helical transmembrane segment at 49 to 69 (MVIVSYVLTVAVMLPASGWLA) threads the bilayer. Topologically, residues 70–76 (DKVGVRN) are periplasmic. A helical transmembrane segment spans residues 77 to 97 (IFFTAIVLFTLGSLFCALSGT). Over 98–101 (LNEL) the chain is Cytoplasmic. Residues 102-124 (LLARALQGVGGAMMVPVGRLTVM) traverse the membrane as a helical segment. The Periplasmic segment spans residues 125-137 (KIVPREQYMAAMT). The helical transmembrane segment at 138 to 158 (FVTLPGQVGPLLGPALGGLLV) threads the bilayer. Topologically, residues 159–164 (EYASWH) are cytoplasmic. Residues 165–185 (WIFLINIPVGIIGAIATLMLM) form a helical membrane-spanning segment. Over 186-196 (PNYTMQTRRFD) the chain is Periplasmic. The helical transmembrane segment at 197–217 (LSGFLLLAVGMAVLTLALDGS) threads the bilayer. Topologically, residues 218 to 224 (KGTGLSP) are cytoplasmic. A helical membrane pass occupies residues 225 to 245 (LTIDGLVAVGVVALVLYLLHA). The Periplasmic segment spans residues 246-262 (RNNNRALFSLKLFRTRT). Residues 263-283 (FSLGLAGSFAGRIGSGMLPFM) traverse the membrane as a helical segment. Residues 284-285 (TP) lie on the Cytoplasmic side of the membrane. A helical transmembrane segment spans residues 286–306 (VFLQIGLGFSPFHAGLMMIPM). At 307 to 341 (VLGSMGMKRIVVQVVNRFGYRRVLVATTLGLSLVT) the chain is on the periplasmic side. The helical transmembrane segment at 342-362 (LLFMTTALLGWYYVLPFVLFL) threads the bilayer. Residues 363–395 (QGMVNSTRFSSMNTLTLKDLPDNLASSGNSLLS) lie on the Cytoplasmic side of the membrane. Residues 396-416 (MIMQLSMSIGVTIAGLLLGLF) form a helical membrane-spanning segment. Topologically, residues 417–430 (GSQHVSIDSGTTQT) are periplasmic. Residues 431-451 (VFMYTWLSMALIIALPAFIFA) form a helical membrane-spanning segment. Over 452 to 471 (RVPNDTHQNVAISRRKRSAQ) the chain is Cytoplasmic.

It belongs to the major facilitator superfamily. TCR/Tet family.

Its subcellular location is the cell inner membrane. The chain is Putative multidrug resistance protein MdtD from Escherichia coli (strain SE11).